The primary structure comprises 109 residues: MKRIKSGDEVIVIAGKSKGHIGKVLRVIDDAVVVEGGNLIKKHIKPNPQKPENKGGIIAREAPLHVSNVAHYNPVTKKADKVGFKYLESNGVSKKVRYYKSNNEIIDRI.

The protein belongs to the universal ribosomal protein uL24 family. In terms of assembly, part of the 50S ribosomal subunit.

Functionally, one of two assembly initiator proteins, it binds directly to the 5'-end of the 23S rRNA, where it nucleates assembly of the 50S subunit. In terms of biological role, one of the proteins that surrounds the polypeptide exit tunnel on the outside of the subunit. This chain is Large ribosomal subunit protein uL24, found in Legionella pneumophila subsp. pneumophila (strain Philadelphia 1 / ATCC 33152 / DSM 7513).